The following is a 165-amino-acid chain: Transcription factor zip-10 (165 aa).

A compositionally biased stretch (low complexity) spans 53–71 (ASLGTSTTSSSRCSSTESS). Residues 53–99 (ASLGTSTTSSSRCSSTESSAAPGKIRRGRPQQEIADGQDAHSQKKRH) are disordered. The stretch at 104 to 150 (ARQYRAQMRQKVENVKSLHDEKEQLELEVKALRQAVSGLQQENAQKD) forms a coiled coil.

The protein resides in the nucleus. Transcription factor that regulates the expression of genes in response to changes in temperature. In particular, binds to the promoter region of genes such as asp-17 in response to severe cold to warm temperature transitions to promote gene expression. Promotes stress-induced death, particularly in older animals, following cold shock followed by warming and this may have evolved as a form of kin survival under thermal stress conditions, favoring the survival of younger animals. This Caenorhabditis elegans protein is Transcription factor zip-10.